A 159-amino-acid chain; its full sequence is Small ribosomal subunit protein uS4 (159 aa).

Positions 106–158 (RRLQTIVYRMGLAKSIYHARQLIVHGHIAIEGRRVTSPGFLVPRELEDKITLV) constitute an S4 RNA-binding domain.

The protein belongs to the universal ribosomal protein uS4 family. Part of the 30S ribosomal subunit. Contacts protein S5. The interaction surface between S4 and S5 is involved in control of translational fidelity.

Its function is as follows. One of the primary rRNA binding proteins, it binds directly to 16S rRNA where it nucleates assembly of the body of the 30S subunit. In terms of biological role, with S5 and S12 plays an important role in translational accuracy. This is Small ribosomal subunit protein uS4 from Pyrobaculum arsenaticum (strain DSM 13514 / JCM 11321 / PZ6).